Reading from the N-terminus, the 355-residue chain is MTARLRPELAGLPVYVPGKNVPGSIKLASNETVYGPLPSVHAAIERAVAIVNRYPDNACVDLKAALAMHLGSDVAPEQIAVGSGSVTLCQQLVQITSAAGDEVMMGWRSFECYLPIVQVAGAIAVKVPLREHTYDLDAMLAAITDRTRLIFVCNPNNPTSTVVDPDALVRFVDAVPADILIAIDEAYVEYIRDGLLPNSLELALSRSNVVVLRTFSKAYGLAGLRVGYAIGHPELITALDKVVMPFAVTNVAQAAAIASLEASGELMARTDALVAERTRVSTTLRDAGFELPPSQANFLWLPLGSRTEDFVQEAANARLVVRPFASEGVRVTIGAPAENDALLQFACDWIARTER.

An N6-(pyridoxal phosphate)lysine modification is found at lysine 217.

It belongs to the class-II pyridoxal-phosphate-dependent aminotransferase family. In terms of assembly, homodimer. Pyridoxal 5'-phosphate serves as cofactor.

It catalyses the reaction an aromatic L-alpha-amino acid + 2-oxoglutarate = an aromatic oxo-acid + L-glutamate. Functionally, aminotransferase that catalyzes the conversion of aromatic amino acids and 2-oxoglutarate into corresponding aromatic oxo acids and L-glutamate. This chain is Aromatic amino acid aminotransferase, found in Mycobacterium avium (strain 104).